Consider the following 426-residue polypeptide: Serine--tRNA ligase (426 aa).

233-235 (TAE) contacts L-serine. Position 264 to 266 (264 to 266 (RRE)) interacts with ATP. Glu-287 provides a ligand contact to L-serine. ATP is bound at residue 351–354 (EISS). Ser-386 contributes to the L-serine binding site.

The protein belongs to the class-II aminoacyl-tRNA synthetase family. Type-1 seryl-tRNA synthetase subfamily. Homodimer. The tRNA molecule binds across the dimer.

It is found in the cytoplasm. It catalyses the reaction tRNA(Ser) + L-serine + ATP = L-seryl-tRNA(Ser) + AMP + diphosphate + H(+). It carries out the reaction tRNA(Sec) + L-serine + ATP = L-seryl-tRNA(Sec) + AMP + diphosphate + H(+). The protein operates within aminoacyl-tRNA biosynthesis; selenocysteinyl-tRNA(Sec) biosynthesis; L-seryl-tRNA(Sec) from L-serine and tRNA(Sec): step 1/1. In terms of biological role, catalyzes the attachment of serine to tRNA(Ser). Is also able to aminoacylate tRNA(Sec) with serine, to form the misacylated tRNA L-seryl-tRNA(Sec), which will be further converted into selenocysteinyl-tRNA(Sec). The chain is Serine--tRNA ligase from Thermosipho africanus (strain TCF52B).